The primary structure comprises 157 residues: ATP synthase subunit b (157 aa).

A helical membrane pass occupies residues 11–31 (LIMFAMFTWFCMKFIWPPIVM).

Belongs to the ATPase B chain family. As to quaternary structure, F-type ATPases have 2 components, F(1) - the catalytic core - and F(0) - the membrane proton channel. F(1) has five subunits: alpha(3), beta(3), gamma(1), delta(1), epsilon(1). F(0) has three main subunits: a(1), b(2) and c(10-14). The alpha and beta chains form an alternating ring which encloses part of the gamma chain. F(1) is attached to F(0) by a central stalk formed by the gamma and epsilon chains, while a peripheral stalk is formed by the delta and b chains.

It localises to the cell inner membrane. Functionally, f(1)F(0) ATP synthase produces ATP from ADP in the presence of a proton or sodium gradient. F-type ATPases consist of two structural domains, F(1) containing the extramembraneous catalytic core and F(0) containing the membrane proton channel, linked together by a central stalk and a peripheral stalk. During catalysis, ATP synthesis in the catalytic domain of F(1) is coupled via a rotary mechanism of the central stalk subunits to proton translocation. In terms of biological role, component of the F(0) channel, it forms part of the peripheral stalk, linking F(1) to F(0). This is ATP synthase subunit b from Vesicomyosocius okutanii subsp. Calyptogena okutanii (strain HA).